A 60-amino-acid polypeptide reads, in one-letter code: UPF0337 protein asr4653 (60 aa).

It belongs to the UPF0337 (CsbD) family.

This chain is UPF0337 protein asr4653, found in Nostoc sp. (strain PCC 7120 / SAG 25.82 / UTEX 2576).